The following is a 344-amino-acid chain: MSKRRLTQNQQRRIKSNHHKKIAKPELEWQDEMLGEVQQGIVVTRHAKHADVETEQGEIYRCNLRRTLKNVVVGDQVSWRKGNEQLQGISGVIEAIYPRKNELSRPDYYDGIKVMAANIDQIIIVSAVLPTLSLNIIDRYLVICETAKIPALIVLNKIDLLSESERQEVQKQLAIYENIGYETLCLSADTGENMEKLDRYLSRGTSIFVGQSGVGKSSLINQLLPEVNALTGAVSDISGLGQHTTTSSRLYHLPQGGNLIDSPGIREFGLWHLEPEQITLGYREFQSVLGTCKFRDCKHKSDPGCAVREAVEKGEINAIRFENYHRLIESRDETKSQRHFRTEE.

The CP-type G domain maps to 100 to 268 (KNELSRPDYY…LIDSPGIREF (169 aa)). GTP contacts are provided by residues 156–159 (NKID) and 210–218 (GQSGVGKSS). The Zn(2+) site is built by C292, C297, H299, and C305.

Belongs to the TRAFAC class YlqF/YawG GTPase family. RsgA subfamily. Monomer. Associates with 30S ribosomal subunit, binds 16S rRNA. It depends on Zn(2+) as a cofactor.

It is found in the cytoplasm. Its function is as follows. One of several proteins that assist in the late maturation steps of the functional core of the 30S ribosomal subunit. Helps release RbfA from mature subunits. May play a role in the assembly of ribosomal proteins into the subunit. Circularly permuted GTPase that catalyzes slow GTP hydrolysis, GTPase activity is stimulated by the 30S ribosomal subunit. This is Small ribosomal subunit biogenesis GTPase RsgA from Actinobacillus pleuropneumoniae serotype 5b (strain L20).